Consider the following 200-residue polypeptide: Small ribosomal subunit protein uS4 (200 aa).

The disordered stretch occupies residues 22–42 (TGKELEKRPYAPGPHGPGQRK). Positions 92 to 155 (ARLDNVVYKL…RNLSIIKESV (64 aa)) constitute an S4 RNA-binding domain.

Belongs to the universal ribosomal protein uS4 family. As to quaternary structure, part of the 30S ribosomal subunit. Contacts protein S5. The interaction surface between S4 and S5 is involved in control of translational fidelity.

In terms of biological role, one of the primary rRNA binding proteins, it binds directly to 16S rRNA where it nucleates assembly of the body of the 30S subunit. Functionally, with S5 and S12 plays an important role in translational accuracy. The sequence is that of Small ribosomal subunit protein uS4 from Bacillus velezensis (strain DSM 23117 / BGSC 10A6 / LMG 26770 / FZB42) (Bacillus amyloliquefaciens subsp. plantarum).